A 611-amino-acid chain; its full sequence is Large ribosomal subunit assembly factor BipA (611 aa).

Residues 7-202 form the tr-type G domain; that stretch reads KNLRNIAIIA…AIVKYTPPPT (196 aa). Residues 19-24 and 132-135 contribute to the GTP site; these read DHGKTT and NKID.

The protein belongs to the TRAFAC class translation factor GTPase superfamily. Classic translation factor GTPase family. BipA subfamily. Monomer.

The protein resides in the cytoplasm. It catalyses the reaction GTP + H2O = GDP + phosphate + H(+). In terms of biological role, a 50S ribosomal subunit assembly protein with GTPase activity, required for 50S subunit assembly at low temperatures, may also play a role in translation. Binds GTP and analogs. Binds the 70S ribosome between the 30S and 50S subunits, in a similar position as ribosome-bound EF-G; it contacts a number of ribosomal proteins, both rRNAs and the A-site tRNA. The sequence is that of Large ribosomal subunit assembly factor BipA from Buchnera aphidicola subsp. Baizongia pistaciae (strain Bp).